A 338-amino-acid chain; its full sequence is Secretory carrier-associated membrane protein 1 (338 aa).

The disordered stretch occupies residues 1-63 (MSDFDSNPFA…PNVPSTQPAI (63 aa)). Ser2 is subject to N-acetylserine. The residue at position 2 (Ser2) is a Phosphoserine. Residues 2 to 155 (SDFDSNPFAD…QKTVKIMYYL (154 aa)) lie on the Cytoplasmic side of the membrane. Position 45 is a phosphothreonine (Thr45). The chain crosses the membrane as a helical span at residues 156-176 (WMFHAVTLFLNIFGCLAWFCV). Over 177-181 (DPSRG) the chain is Lumenal. Residues 182-202 (VDFGLSILWFLLFTPCSFVCW) form a helical membrane-spanning segment. Over 203 to 217 (YRPLYGAFRSDSSFR) the chain is Cytoplasmic. The helical transmembrane segment at 218 to 238 (FFVFFFVYICQFAVHVLQAAG) threads the bilayer. Topologically, residues 239–261 (FHNWGNCGWISSLTGLNQSIPVG) are lumenal. Residues 262-282 (IMMIIIAALFTASAVISLVMF) traverse the membrane as a helical segment. The Cytoplasmic portion of the chain corresponds to 283–338 (KKVHGLYRTTGASFEKAQQEFATGVMSNKTVQTAAANAASTAATSAAQNAFKGNQI).

This sequence belongs to the SCAMP family. As to quaternary structure, interacts with SYNRG, ITSN1 and SLC9A7.

It localises to the golgi apparatus. Its subcellular location is the trans-Golgi network membrane. It is found in the recycling endosome membrane. Functionally, functions in post-Golgi recycling pathways. Acts as a recycling carrier to the cell surface. This chain is Secretory carrier-associated membrane protein 1 (SCAMP1), found in Sus scrofa (Pig).